The primary structure comprises 220 residues: CASP-like protein 4B1 (220 aa).

The Cytoplasmic segment spans residues 1-74 (MAMVTTEAAA…RWRREDMLDK (74 aa)). Residues 13-56 (TTAATAAAEKPQDVEKPDYAPYNGASTTADGGTGARARRGDGGG) are disordered. Residues 75–95 (SPLALHAAAAIFAFVALVLVA) traverse the membrane as a helical segment. The Extracellular portion of the chain corresponds to 96-109 (SNQHGDWMQFDRYQ). A helical membrane pass occupies residues 110–127 (EYRYLLAIASLALLYSLA). The Cytoplasmic portion of the chain corresponds to 128-152 (QAARHAHRMRGGVDPVSSASARLLD). The helical transmembrane segment at 153 to 173 (FVGDQVVAYLLMSALSAAVPI) threads the bilayer. The Extracellular portion of the chain corresponds to 174–188 (TNRMRSAVVNNFTDA). N-linked (GlcNAc...) asparagine glycosylation occurs at asparagine 184. A helical transmembrane segment spans residues 189-209 (TAAAISMAFFSFVALALSAVV). The Cytoplasmic segment spans residues 210-220 (SGYKLSKQTYM).

This sequence belongs to the Casparian strip membrane proteins (CASP) family. As to quaternary structure, homodimer and heterodimers.

The protein resides in the cell membrane. This chain is CASP-like protein 4B1, found in Sorghum bicolor (Sorghum).